Here is a 183-residue protein sequence, read N- to C-terminus: Putative ribosomal N-acetyltransferase YdaF (183 aa).

The 167-residue stretch at 10 to 176 (ITIRLLEPKD…HDLVYYSLLK (167 aa)) folds into the N-acetyltransferase domain.

The protein belongs to the acetyltransferase family. Homohexamer, and homodimer.

Putative N-acetyltransferase. May act on ribosomal proteins (Potential). The sequence is that of Putative ribosomal N-acetyltransferase YdaF (ydaF) from Bacillus subtilis (strain 168).